We begin with the raw amino-acid sequence, 279 residues long: Acetyl-coenzyme A carboxylase carboxyl transferase subunit beta (279 aa).

A CoA carboxyltransferase N-terminal domain is found at 23–279 (LWSKCDECGA…LIKLFKHLRG (257 aa)). Positions 27, 30, 46, and 49 each coordinate Zn(2+). A C4-type zinc finger spans residues 27–49 (CDECGAALHKKQLEDHLYTCPEC).

The protein belongs to the AccD/PCCB family. As to quaternary structure, acetyl-CoA carboxylase is a heterohexamer composed of biotin carboxyl carrier protein (AccB), biotin carboxylase (AccC) and two subunits each of ACCase subunit alpha (AccA) and ACCase subunit beta (AccD). Requires Zn(2+) as cofactor.

Its subcellular location is the cytoplasm. It catalyses the reaction N(6)-carboxybiotinyl-L-lysyl-[protein] + acetyl-CoA = N(6)-biotinyl-L-lysyl-[protein] + malonyl-CoA. The protein operates within lipid metabolism; malonyl-CoA biosynthesis; malonyl-CoA from acetyl-CoA: step 1/1. In terms of biological role, component of the acetyl coenzyme A carboxylase (ACC) complex. Biotin carboxylase (BC) catalyzes the carboxylation of biotin on its carrier protein (BCCP) and then the CO(2) group is transferred by the transcarboxylase to acetyl-CoA to form malonyl-CoA. In Chlorobaculum parvum (strain DSM 263 / NCIMB 8327) (Chlorobium vibrioforme subsp. thiosulfatophilum), this protein is Acetyl-coenzyme A carboxylase carboxyl transferase subunit beta.